We begin with the raw amino-acid sequence, 122 residues long: Urocortin (122 aa).

A signal peptide spans 1–25 (MRQRGRATLLVALLLLVQLRPESSQ). A propeptide spanning residues 26-80 (WSPAAAAANVVQDPNLRWNPGVRNQGGGVRALLLLLAERFPRRAGSEPAGERQRR) is cleaved from the precursor. Val-120 is modified (valine amide).

Belongs to the sauvagine/corticotropin-releasing factor/urotensin I family. In terms of assembly, interacts with CRHR1 and CRHR2 (via their N-terminal extracellular domain).

The protein localises to the secreted. Functionally, acts in vitro to stimulate the secretion of adrenocorticotropic hormone (ACTH). Binds with high affinity to CRF receptor types 1, 2-alpha, and 2-beta. Plays a role in the establishment of normal hearing thresholds. Reduces food intake and regulates ghrelin levels in gastric body and plasma. The protein is Urocortin (Ucn) of Rattus norvegicus (Rat).